The primary structure comprises 286 residues: Aquaporin NIP4-1 (286 aa).

2 helical membrane-spanning segments follow: residues 59 to 79 (VMVE…AALM) and 86 to 106 (LTFP…LSWL). The NPA 1 signature appears at 112-114 (NPA). Transmembrane regions (helical) follow at residues 133-153 (LYVA…NAVM), 173-193 (LPFL…ATVA), and 201-221 (TVGG…IGPV). The NPA 2 motif lies at 227-229 (NPA). The chain crosses the membrane as a helical span at residues 241–261 (YDGVWIYVVAPVAGMLVGALC).

This sequence belongs to the MIP/aquaporin (TC 1.A.8) family. NIP (TC 1.A.8.12) subfamily. As to expression, expressed in leaves and at lower levels in roots.

It localises to the membrane. Its function is as follows. Aquaporins facilitate the transport of water and small neutral solutes across cell membranes. In Oryza sativa subsp. japonica (Rice), this protein is Aquaporin NIP4-1 (NIP4-1).